The chain runs to 312 residues: Ribosomal protein L11 methyltransferase (312 aa).

The S-adenosyl-L-methionine site is built by T160, G181, D203, and N246.

This sequence belongs to the methyltransferase superfamily. PrmA family.

It localises to the cytoplasm. The enzyme catalyses L-lysyl-[protein] + 3 S-adenosyl-L-methionine = N(6),N(6),N(6)-trimethyl-L-lysyl-[protein] + 3 S-adenosyl-L-homocysteine + 3 H(+). Functionally, methylates ribosomal protein L11. This is Ribosomal protein L11 methyltransferase from Staphylococcus epidermidis (strain ATCC 12228 / FDA PCI 1200).